Reading from the N-terminus, the 78-residue chain is Acyl carrier protein 1 (78 aa).

In terms of domain architecture, Carrier spans 2 to 77 (STIEERVKKI…EAIDYIVAHQ (76 aa)). Ser37 bears the O-(pantetheine 4'-phosphoryl)serine mark.

The protein belongs to the acyl carrier protein (ACP) family. 4'-phosphopantetheine is transferred from CoA to a specific serine of apo-ACP by AcpS. This modification is essential for activity because fatty acids are bound in thioester linkage to the sulfhydryl of the prosthetic group.

The protein localises to the cytoplasm. The protein operates within lipid metabolism; fatty acid biosynthesis. Its function is as follows. Carrier of the growing fatty acid chain in fatty acid biosynthesis. In Pseudomonas aeruginosa (strain ATCC 15692 / DSM 22644 / CIP 104116 / JCM 14847 / LMG 12228 / 1C / PRS 101 / PAO1), this protein is Acyl carrier protein 1.